Reading from the N-terminus, the 286-residue chain is Shikimate dehydrogenase (NADP(+)) (286 aa).

Shikimate-binding positions include 21 to 23 (TLS) and threonine 68. Catalysis depends on lysine 72, which acts as the Proton acceptor. NADP(+) is bound at residue glutamate 84. Shikimate is bound by residues asparagine 93 and aspartate 108. Residues 132–136 (GNGGA) and leucine 230 each bind NADP(+). Residue tyrosine 232 participates in shikimate binding. Position 253 (glycine 253) interacts with NADP(+).

This sequence belongs to the shikimate dehydrogenase family. Homodimer.

It catalyses the reaction shikimate + NADP(+) = 3-dehydroshikimate + NADPH + H(+). The protein operates within metabolic intermediate biosynthesis; chorismate biosynthesis; chorismate from D-erythrose 4-phosphate and phosphoenolpyruvate: step 4/7. Functionally, involved in the biosynthesis of the chorismate, which leads to the biosynthesis of aromatic amino acids. Catalyzes the reversible NADPH linked reduction of 3-dehydroshikimate (DHSA) to yield shikimate (SA). The chain is Shikimate dehydrogenase (NADP(+)) from Microcystis aeruginosa (strain NIES-843 / IAM M-2473).